Reading from the N-terminus, the 93-residue chain is Small ribosomal subunit protein uS19 (93 aa).

The protein belongs to the universal ribosomal protein uS19 family.

Its function is as follows. Protein S19 forms a complex with S13 that binds strongly to the 16S ribosomal RNA. This chain is Small ribosomal subunit protein uS19, found in Helicobacter acinonychis (strain Sheeba).